A 97-amino-acid chain; its full sequence is Citrate lyase acyl carrier protein (97 aa).

Ser14 carries the post-translational modification O-(phosphoribosyl dephospho-coenzyme A)serine.

The protein belongs to the CitD family. In terms of assembly, oligomer with a subunit composition of (alpha,beta,gamma)6.

Its subcellular location is the cytoplasm. Covalent carrier of the coenzyme of citrate lyase. The protein is Citrate lyase acyl carrier protein of Cronobacter sakazakii (strain ATCC BAA-894) (Enterobacter sakazakii).